We begin with the raw amino-acid sequence, 824 residues long: Ras guanine nucleotide exchange factor I (824 aa).

2 disordered regions span residues 1 to 51 and 65 to 167; these read MSNP…KPTK and GSNL…LILD. A compositionally biased stretch (low complexity) spans 8-41; sequence SNSTNGSSNSLNGESVSPNRLGSSPGSPISKASS. The span at 83-95 shows a compositional bias: polar residues; sequence NSSVGLLNNSTGS. Residues 104–116 show a composition bias toward low complexity; that stretch reads SSPKSSYILSSSI. The segment covering 117–128 has biased composition (gly residues); it reads GSGGSGGGGGSS. Residues 136–167 are compositionally biased toward low complexity; it reads SASNNSSGPRSRSGSLGKNNSSQQNNNNLILD. One can recognise a LisH domain in the interval 223–255; it reads GRDNILQLILQHLQFEGLMDSRKILEEEAKIQY. Disordered stretches follow at residues 330-354 and 398-425; these read YVDE…TTAT and NTQQ…STGT. Basic and acidic residues predominate over residues 331-341; sequence VDEKDNDKPSK. Low complexity predominate over residues 343-354; the sequence is SPTTATTTTTAT. Over residues 413–425 the composition is skewed to polar residues; that stretch reads LKSTQSITGSTGT. Residues 426–551 enclose the N-terminal Ras-GEF domain; the sequence is LGPQVKAASL…VISDALNSGL (126 aa). Residues 585 to 816 form the Ras-GEF domain; sequence DEEEISRQLT…YTRSMSFEPR (232 aa).

In terms of biological role, promotes the exchange of Ras-bound GDP by GTP. The polypeptide is Ras guanine nucleotide exchange factor I (gefI) (Dictyostelium discoideum (Social amoeba)).